We begin with the raw amino-acid sequence, 400 residues long: Argininosuccinate synthase (400 aa).

9-17 (AYSGGLDTS) serves as a coordination point for ATP. Tyr87 provides a ligand contact to L-citrulline. Residue Gly117 participates in ATP binding. The L-aspartate site is built by Thr119, Asn123, and Asp124. Asn123 provides a ligand contact to L-citrulline. Arg127, Ser176, Ser185, Glu261, and Tyr273 together coordinate L-citrulline.

It belongs to the argininosuccinate synthase family. Type 1 subfamily. As to quaternary structure, homotetramer.

Its subcellular location is the cytoplasm. It catalyses the reaction L-citrulline + L-aspartate + ATP = 2-(N(omega)-L-arginino)succinate + AMP + diphosphate + H(+). The protein operates within amino-acid biosynthesis; L-arginine biosynthesis; L-arginine from L-ornithine and carbamoyl phosphate: step 2/3. This Chlorobium limicola (strain DSM 245 / NBRC 103803 / 6330) protein is Argininosuccinate synthase.